We begin with the raw amino-acid sequence, 681 residues long: uncharacterized protein (681 aa).

Belongs to the protein kinase superfamily. ADCK protein kinase family.

This is an uncharacterized protein from Synechocystis sp. (strain ATCC 27184 / PCC 6803 / Kazusa).